We begin with the raw amino-acid sequence, 137 residues long: ATP synthase epsilon chain, sodium ion specific (137 aa).

It belongs to the ATPase epsilon chain family. F-type ATPases have 2 components, CF(1) - the catalytic core - and CF(0) - the membrane proton channel. CF(1) has five subunits: alpha(3), beta(3), gamma(1), delta(1), epsilon(1). CF(0) has three main subunits: a, b and c.

Its subcellular location is the cell inner membrane. In terms of biological role, produces ATP from ADP in the presence of a sodium gradient across the membrane. This is ATP synthase epsilon chain, sodium ion specific (atpC) from Propionigenium modestum.